A 342-amino-acid polypeptide reads, in one-letter code: Ferredoxin--NADP reductase (342 aa).

FAD-binding residues include cysteine 17, aspartate 36, glutamine 44, tyrosine 49, valine 89, phenylalanine 124, aspartate 289, and threonine 330.

It belongs to the ferredoxin--NADP reductase type 2 family. In terms of assembly, homodimer. Requires FAD as cofactor.

The enzyme catalyses 2 reduced [2Fe-2S]-[ferredoxin] + NADP(+) + H(+) = 2 oxidized [2Fe-2S]-[ferredoxin] + NADPH. In Rhodopseudomonas palustris (strain ATCC BAA-98 / CGA009), this protein is Ferredoxin--NADP reductase.